Consider the following 102-residue polypeptide: Small ribosomal subunit protein uS10 (102 aa).

It belongs to the universal ribosomal protein uS10 family. As to quaternary structure, part of the 30S ribosomal subunit.

Functionally, involved in the binding of tRNA to the ribosomes. This chain is Small ribosomal subunit protein uS10, found in Limosilactobacillus reuteri (strain DSM 20016) (Lactobacillus reuteri).